We begin with the raw amino-acid sequence, 355 residues long: Capsid protein VP1/VP2 (355 aa).

Residues 1–21 show a composition bias toward basic and acidic residues; the sequence is MADSTTMEHDGRGTKRKREAD. The segment at 1–41 is disordered; the sequence is MADSTTMEHDGRGTKRKREADGGSGQGVGKGNSNAVKEGYG.

This sequence belongs to the parvoviridae capsid protein family.

It is found in the virion. In terms of biological role, capsid protein self-assembles to form an icosahedral capsid with a T=1 symmetry, about 22 nm in diameter, and consisting of 60 copies of size variants of the capsid proteins, which differ in the N-terminushe capsid encapsulates the genomic ssDNA. Capsid proteins are responsible for the attachment to host cell receptors. This attachment induces virion internalization predominantly through clathrin-dependent endocytosis. The polypeptide is Capsid protein VP1/VP2 (VP) (Aedes albopictus densovirus (isolate Boublik/1994) (AalDNV)).